A 1585-amino-acid chain; its full sequence is Adhesion G protein-coupled receptor B2 (1585 aa).

Positions 1–32 (MENTGWMGKGHRMTPACPLLLSVILSLRLATA) are cleaved as a signal peptide. The Extracellular portion of the chain corresponds to 33–936 (FDPAPSACSA…ELAGSPSVPL (904 aa)). 3 N-linked (GlcNAc...) asparagine glycosylation sites follow: N106, N191, and N192. The span at 229–238 (AGAGSTTTTS) shows a compositional bias: low complexity. A disordered region spans residues 229–271 (AGAGSTTTTSPGPPAAHTLSNALVPGGPAPPAEADLHSGSSND). O-linked (Xyl...) (chondroitin sulfate) serine glycosylation is present at S266. TSP type-1 domains are found at residues 309-362 (DPAA…ATCP), 364-417 (HGVW…AACP), 419-472 (EGQW…LECP), and 475-528 (DSKW…KRCP). Disulfide bonds link C321–C355, C325–C361, C336–C345, C376–C411, C380–C416, C391–C401, C431–C466, C435–C471, C446–C456, C487–C522, C491–C527, C502–C512, C534–C569, and C557–C587. N356 is a glycosylation site (N-linked (GlcNAc...) asparagine). A glycan (N-linked (GlcNAc...) asparagine) is linked at N437. N-linked (GlcNAc...) asparagine glycans are attached at residues N560 and N645. The GAIN-B domain occupies 757-924 (DRLFLPKEVL…AVLAQPPKDL (168 aa)). Positions 767–806 (SLSSPGKPATSGAAGSPGRGRGPGTVPPGPGHSHQRLLPA) are disordered. A compositionally biased stretch (low complexity) spans 769 to 780 (SSPGKPATSGAA). N-linked (GlcNAc...) asparagine glycosylation is present at N867. 2 cysteine pairs are disulfide-bonded: C874–C906 and C894–C908. The segment at 874–924 (CASWDYSRADASSGDWDTENCQTLETQAAHTRCQCQHLSTFAVLAQPPKDL) is GPS. Residues 937 to 957 (VIGCAVSCMALLTLLAIYAAF) traverse the membrane as a helical segment. At 958 to 965 (WRFIKSER) the chain is on the cytoplasmic side. A helical transmembrane segment spans residues 966 to 986 (SIILLNFCLSILASNILILVG). Residues 987–994 (QSRVLSKG) lie on the Extracellular side of the membrane. A helical transmembrane segment spans residues 995-1015 (VCTMTAAFLHFFFLSSFCWVL). Residues 1016 to 1036 (TEAWQSYLAVIGRMRTRLVRK) are Cytoplasmic-facing. A helical transmembrane segment spans residues 1037–1057 (RFLCLGWGLPALVVAVSVGFT). Over 1058 to 1078 (RTKGYGTSSYCWLSLEGGLLY) the chain is Extracellular. Residues 1079-1099 (AFVGPAAVIVLVNMLIGIIVF) traverse the membrane as a helical segment. Topologically, residues 1100–1121 (NKLMARDGISDKSKKQRAGSER) are cytoplasmic. Residues 1122-1142 (CPWASLLLPCSACGAVPSPLL) form a helical membrane-spanning segment. Topologically, residues 1143–1153 (SSASARNAMAS) are extracellular. Residues 1154–1174 (LWSSCVVLPLLALTWMSAVLA) traverse the membrane as a helical segment. The Cytoplasmic segment spans residues 1175 to 1585 (MTDRRSVLFQ…PPDGDFQTEV (411 aa)). Y1351 bears the Phosphotyrosine mark. Disordered regions lie at residues 1359–1385 (LSLQ…PRRA), 1423–1454 (FQPP…GSTM), and 1498–1585 (YRSQ…QTEV). Positions 1372–1382 (DAPRARPEGTP) are enriched in basic and acidic residues. A compositionally biased stretch (polar residues) spans 1543–1552 (SWSTFKSMTL). The segment covering 1575-1585 (EPPDGDFQTEV) has biased composition (acidic residues).

It belongs to the G-protein coupled receptor 2 family. Adhesion G-protein coupled receptor (ADGR) subfamily. Heterodimer of 2 chains generated by proteolytic processing; the large extracellular N-terminal fragment and the membrane-bound C-terminal fragment predominantly remain associated and non-covalently linked. Interacts with GABPB2. Interacts (via carboxy-terminus) with TAX1BP3. Interacts with GNAZ. Interacts with SH3GL2. Glycosylated. In terms of processing, autoproteolytically processed at the GPS region of the GAIN-B domain; this cleavage modulates receptor activity. Additionally, furin is involved in the cleavage at another site, in the middle of the extracellular domain, generating a soluble fragment. As to expression, detected in cerebrospinal fluid (at protein level). Strongly expressed in brain. Also detected in heart, thymus, skeletal muscle, and different cell lines.

It is found in the cell membrane. Its subcellular location is the secreted. Its activity is regulated as follows. Receptor activity is regulated by proteolytic processing. The long N-terminal has a an inhibitory effect on the constitutive signaling activity. Removal of the N-terminal region induces an increase of the receptor activity. In terms of biological role, orphan G-protein coupled receptor involved in cell adhesion and probably in cell-cell interactions. Activates NFAT-signaling pathway, a transcription factor, via the G-protein GNAZ. Involved in angiogenesis inhibition. This is Adhesion G protein-coupled receptor B2 from Homo sapiens (Human).